Reading from the N-terminus, the 367-residue chain is Flagellar P-ring protein (367 aa).

Residues 1-21 (MYVFKALAGIVLALVATLAHA) form the signal peptide.

Belongs to the FlgI family. The basal body constitutes a major portion of the flagellar organelle and consists of four rings (L,P,S, and M) mounted on a central rod.

The protein resides in the periplasm. It localises to the bacterial flagellum basal body. Assembles around the rod to form the L-ring and probably protects the motor/basal body from shearing forces during rotation. The sequence is that of Flagellar P-ring protein from Salmonella choleraesuis (strain SC-B67).